The primary structure comprises 223 residues: Thymidine kinase (223 aa).

Residues 19–26 (GPMFAGKT) and 96–99 (DEVQ) each bind ATP. Catalysis depends on Glu97, which acts as the Proton acceptor. The Zn(2+) site is built by Cys153, Cys156, Cys191, and His194.

Belongs to the thymidine kinase family. In terms of assembly, homotetramer.

It is found in the cytoplasm. The catalysed reaction is thymidine + ATP = dTMP + ADP + H(+). The protein is Thymidine kinase of Ureaplasma parvum serovar 3 (strain ATCC 27815 / 27 / NCTC 11736).